The chain runs to 140 residues: Protein SNA4 (140 aa).

Residues 1-8 (MCCYCVCC) are Cytoplasmic-facing. S-palmitoyl cysteine attachment occurs at residues Cys-2, Cys-3, Cys-5, Cys-7, and Cys-8. A helical membrane pass occupies residues 9 to 29 (TVSDFILYIVAFFFPPAAVLL). At 30–41 (RSGPCSSDFLLN) the chain is on the vacuolar side. The chain crosses the membrane as a helical span at residues 42–62 (VLLTLLGFLPGMLHAFYYITI). Residues 63–140 (TSPLRNAEYV…LVESPPPYVP (78 aa)) are Cytoplasmic-facing. Residues 84-140 (RNVPSNRPQNSQTPQNRPQQGSSARNVYPSVETPLLQGAAPHDNKQSLVESPPPYVP) form a disordered region. Residues 85 to 108 (NVPSNRPQNSQTPQNRPQQGSSAR) show a composition bias toward polar residues. A Glycyl lysine isopeptide (Lys-Gly) (interchain with G-Cter in ubiquitin) cross-link involves residue Lys-128. The residue at position 134 (Ser-134) is a Phosphoserine.

The protein belongs to the UPF0057 (PMP3) family.

Its subcellular location is the vacuole membrane. The chain is Protein SNA4 (SNA4) from Saccharomyces cerevisiae (strain ATCC 204508 / S288c) (Baker's yeast).